Here is a 502-residue protein sequence, read N- to C-terminus: Alpha-ketoglutarate-dependent dioxygenase FTO (502 aa).

Residues 32 to 324 (TPKDDEFYQQ…SSTHRVAECS (293 aa)) are fe2OG dioxygenase domain. Residues R96 and Y108 each coordinate substrate. 2-oxoglutarate is bound at residue N202. The interval 210–221 (PYLKEEPYFGMG) is loop L1; predicted to block binding of double-stranded DNA or RNA. Position 213 is an N6-acetyllysine (K213). Residues H228 and D230 each contribute to the Fe cation site. Substrate is bound at residue 228–231 (HHDE). Y292 serves as a coordination point for 2-oxoglutarate. H304 serves as a coordination point for Fe cation. 2-oxoglutarate-binding positions include 313-315 (RFS), T317, and R319.

Belongs to the fto family. In terms of assembly, monomer. May also exist as homodimer. Fe(2+) serves as cofactor. As to expression, ubiquitous. Detected in brain, brain cortex, hypothalamus, cerebellum, liver, pancreas, heart, kidney, white adipose tissue and skeletal muscle. Most abundant in the brain, particularly in hypothalamic nuclei governing energy balance.

The protein localises to the nucleus. The protein resides in the nucleus speckle. Its subcellular location is the cytoplasm. It catalyses the reaction a 5'-end (N(7)-methyl 5'-triphosphoguanosine)-(N(6),2'-O-dimethyladenosine) in mRNA + 2-oxoglutarate + O2 = a 5'-end (N(7)-methyl 5'-triphosphoguanosine)-(2'-O-methyladenosine) in mRNA + formaldehyde + succinate + CO2. The enzyme catalyses an N(6)-methyladenosine in mRNA + 2-oxoglutarate + O2 = an adenosine in mRNA + formaldehyde + succinate + CO2. It carries out the reaction N(6)-methyladenosine in U6 snRNA + 2-oxoglutarate + O2 = adenosine in U6 snRNA + formaldehyde + succinate + CO2. The catalysed reaction is a 5'-end (N(7)-methyl 5'-triphosphoguanosine)-(N(6),2'-O-dimethyladenosine) in U6 snRNA + 2-oxoglutarate + O2 = a 5'-end (N(7)-methyl 5'-triphosphoguanosine)-(2'-O-methyladenosine) in U6 snRNA + formaldehyde + succinate + CO2. It catalyses the reaction an N(1)-methyladenosine in tRNA + 2-oxoglutarate + O2 = an adenosine in tRNA + formaldehyde + succinate + CO2. Activated by ascorbate. Inhibited by N-oxalylglycine, fumarate and succinate. RNA demethylase that mediates oxidative demethylation of different RNA species, such as mRNAs, tRNAs and snRNAs, and acts as a regulator of fat mass, adipogenesis and energy homeostasis. Specifically demethylates N(6)-methyladenosine (m6A) RNA, the most prevalent internal modification of messenger RNA (mRNA) in higher eukaryotes. M6A demethylation by FTO affects mRNA expression and stability. Also able to demethylate m6A in U6 small nuclear RNA (snRNA). Mediates demethylation of N(6),2'-O-dimethyladenosine cap (m6A(m)), by demethylating the N(6)-methyladenosine at the second transcribed position of mRNAs and U6 snRNA. Demethylation of m6A(m) in the 5'-cap by FTO affects mRNA stability by promoting susceptibility to decapping. Also acts as a tRNA demethylase by removing N(1)-methyladenine from various tRNAs. Has no activity towards 1-methylguanine. Has no detectable activity towards double-stranded DNA. Also able to repair alkylated DNA and RNA by oxidative demethylation: demethylates single-stranded RNA containing 3-methyluracil, single-stranded DNA containing 3-methylthymine and has low demethylase activity towards single-stranded DNA containing 1-methyladenine or 3-methylcytosine. Ability to repair alkylated DNA and RNA is however unsure in vivo. Involved in the regulation of fat mass, adipogenesis and body weight, thereby contributing to the regulation of body size and body fat accumulation. Involved in the regulation of thermogenesis and the control of adipocyte differentiation into brown or white fat cells. Regulates activity of the dopaminergic midbrain circuitry via its ability to demethylate m6A in mRNAs. This chain is Alpha-ketoglutarate-dependent dioxygenase FTO, found in Mus musculus (Mouse).